The sequence spans 208 residues: ATP phosphoribosyltransferase (208 aa).

It belongs to the ATP phosphoribosyltransferase family. Short subfamily. In terms of assembly, heteromultimer composed of HisG and HisZ subunits.

The protein localises to the cytoplasm. The enzyme catalyses 1-(5-phospho-beta-D-ribosyl)-ATP + diphosphate = 5-phospho-alpha-D-ribose 1-diphosphate + ATP. Its pathway is amino-acid biosynthesis; L-histidine biosynthesis; L-histidine from 5-phospho-alpha-D-ribose 1-diphosphate: step 1/9. Its function is as follows. Catalyzes the condensation of ATP and 5-phosphoribose 1-diphosphate to form N'-(5'-phosphoribosyl)-ATP (PR-ATP). Has a crucial role in the pathway because the rate of histidine biosynthesis seems to be controlled primarily by regulation of HisG enzymatic activity. The sequence is that of ATP phosphoribosyltransferase (hisG) from Thermotoga maritima (strain ATCC 43589 / DSM 3109 / JCM 10099 / NBRC 100826 / MSB8).